The sequence spans 240 residues: Flagellar L-ring protein (240 aa).

Positions 1–20 are cleaved as a signal peptide; it reads MIRNFLLFFMPIYAILFLSG. C21 carries N-palmitoyl cysteine lipidation. C21 is lipidated: S-diacylglycerol cysteine.

This sequence belongs to the FlgH family. In terms of assembly, the basal body constitutes a major portion of the flagellar organelle and consists of four rings (L,P,S, and M) mounted on a central rod.

It localises to the cell outer membrane. The protein resides in the bacterial flagellum basal body. Its function is as follows. Assembles around the rod to form the L-ring and probably protects the motor/basal body from shearing forces during rotation. The chain is Flagellar L-ring protein from Sulfurimonas denitrificans (strain ATCC 33889 / DSM 1251) (Thiomicrospira denitrificans (strain ATCC 33889 / DSM 1251)).